The following is a 362-amino-acid chain: 4-hydroxytryptamine kinase (362 aa).

ATP is bound by residues asparagine 37, lysine 57, and 118–120 (QDV). Aspartate 224 is an active-site residue. An ATP-binding site is contributed by 249 to 251 (DWE).

It belongs to the methylthioribose kinase family. Monomer. Mg(2+) serves as cofactor.

It carries out the reaction 4-hydroxytryptamine + ATP = norbaeocystin + ADP + H(+). The catalysed reaction is psilocin + ATP = psilocybin + ADP + H(+). It catalyses the reaction 4-hydroxy-N,N,N-trimethyltryptamine + ATP = aeruginascin + ADP + H(+). It functions in the pathway secondary metabolite biosynthesis. Functionally, 4-hydroxytryptamine kinase; part of the gene cluster that mediates the biosynthesis of psilocybin, a psychotropic tryptamine-derived natural product. The first step in the pathway is the decarboxylation of L-tryptophan to tryptamine by the decarboxylase psiD. 4-hydroxy-L-tryptophan is accepted as substrate by psiD as well. The cytochrome P450 monooxygenase psiH then converts tryptamine to 4-hydroxytryptamine. The kinase psiK catalyzes the 4-O-phosphorylation step by converting 4-hydroxytryptamine into norbaeocystin. The methyltransferase psiM then catalyzes iterative methyl transfer to the amino group of norbaeocystin to yield psilocybin via a monomethylated intermediate, baeocystin. 4-hydroxy-6-methyl-l-tryptophancan also be converted the decarboxylase PsiD, kinase PsiK, and methyltransferase PsiM into respectively 6-methyl-norbaeocystin, 6-methylbaeocystin, and 6-methylpsilocybin. PsiK kinase can also turn psilocin into psilocybin. This activity may represent a protective mechanism to rephosphorylate the unstable psilocin to the stable psilocybin in case of intracellular ester cleavage. Moreover, psiK is able to O-phosphorylate the quaternary amine 4-hydroxy-N,N,N-trimethyltryptamine (4-OH-TMT) to yield aeruginascin, another bioactive compound found in Psilocybe species. In Psilocybe cubensis (Psychedelic mushroom), this protein is 4-hydroxytryptamine kinase.